A 263-amino-acid polypeptide reads, in one-letter code: N-acyl homoserine lactonase AttM (263 aa).

The Zn(2+) site is built by His-103, His-105, Asp-107, His-108, His-180, Asp-202, and His-247.

The protein belongs to the metallo-beta-lactamase superfamily. Zn(2+) serves as cofactor.

The catalysed reaction is an N-acyl-L-homoserine lactone + H2O = an N-acyl-L-homoserine + H(+). This Rhizobium johnstonii (strain DSM 114642 / LMG 32736 / 3841) (Rhizobium leguminosarum bv. viciae) protein is N-acyl homoserine lactonase AttM.